The sequence spans 1379 residues: ABC multidrug transporter MDR2 (1379 aa).

A helical membrane pass occupies residues 65–85 (IALIVIGTIAGIGAGIPFPLL). The ABC transmembrane type-1 1 domain maps to 69 to 367 (VIGTIAGIGA…MAPFMHIFAS (299 aa)). N-linked (GlcNAc...) asparagine glycosylation occurs at Asn97. The next 5 membrane-spanning stretches (helical) occupy residues 119 to 139 (VLQVIYVSILNFVCMYIHTGC), 193 to 213 (KVGLFIGTISYFVAAYIVAFL), 215 to 235 (VATIAAMLMSVVPIYFLMAFG), 301 to 321 (IQFGMLYFVAYASNALAFWQG), and 336 to 356 (VSVGAVYTVIFVLLDASFVLS). Residues 403-682 (IELQDVTFNY…DGVYAGMVRL (280 aa)) form the ABC transporter 1 domain. 438–445 (GTSGSGKS) provides a ligand contact to ATP. N-linked (GlcNAc...) asparagine glycosylation is found at Asn552 and Asn633. Residues 738 to 758 (YMPEEADSLPTEPENEKEKPK) form a disordered region. 4 helical membrane passes run 781 to 801 (LGLITSIMIGVSYTGEAVIFG), 820 to 840 (GMLFGLLFFILAIVKFAAVIV), 901 to 921 (IGVLFSTVANLFAGVILSHVI), and 922 to 942 (AWRIAVVLLATLPVLLASGVL). Residues 781–1068 (LGLITSIMIG…MFALVPDISK (288 aa)) enclose the ABC transmembrane type-1 2 domain. N-linked (GlcNAc...) asparagine glycosylation occurs at Asn989. 2 helical membrane-spanning segments follow: residues 1008 to 1028 (FWLSLAYSISTLVYALAYWWG) and 1032 to 1052 (ILAGMYTQVQFFIVLPALLFS). The region spanning 1135 to 1374 (VQFRNVHFRY…CESYRANVIH (240 aa)) is the ABC transporter 2 domain. 1170–1177 (GPSGSGKS) is an ATP binding site.

This sequence belongs to the ABC transporter superfamily. ABCB family. Multidrug resistance exporter (TC 3.A.1.201) subfamily.

The protein resides in the cell membrane. In terms of biological role, pleiotropic ABC efflux transporter that may be involved in the modulation susceptibility to a wide range of unrelated cytotoxic compounds. The sequence is that of ABC multidrug transporter MDR2 from Trichophyton equinum (strain ATCC MYA-4606 / CBS 127.97) (Horse ringworm fungus).